The chain runs to 824 residues: Lon protease (824 aa).

The interval 1–23 (MNEPMSLFDDLPEEHDEPQEAPE) is disordered. Over residues 10 to 20 (DLPEEHDEPQE) the composition is skewed to acidic residues. Residues 26–222 (LPMVVLGEMV…KVYLVLARQL (197 aa)) enclose the Lon N-terminal domain. Residue 375-382 (GPPGVGKT) participates in ATP binding. Residues 617–798 (QDEVGVATGV…DEVLRIALSR (182 aa)) form the Lon proteolytic domain. Catalysis depends on residues serine 704 and lysine 747. Residues 800 to 824 (PTPANNQNGSHTNNRGQPSPAPAGT) are disordered. Positions 802–816 (PANNQNGSHTNNRGQ) are enriched in polar residues.

The protein belongs to the peptidase S16 family. Homohexamer. Organized in a ring with a central cavity.

The protein resides in the cytoplasm. The enzyme catalyses Hydrolysis of proteins in presence of ATP.. In terms of biological role, ATP-dependent serine protease that mediates the selective degradation of mutant and abnormal proteins as well as certain short-lived regulatory proteins. Required for cellular homeostasis and for survival from DNA damage and developmental changes induced by stress. Degrades polypeptides processively to yield small peptide fragments that are 5 to 10 amino acids long. Binds to DNA in a double-stranded, site-specific manner. This chain is Lon protease, found in Chloroflexus aggregans (strain MD-66 / DSM 9485).